The primary structure comprises 207 residues: Methylated-DNA--protein-cysteine methyltransferase (207 aa).

DNA contacts are provided by tyrosine 123 and arginine 137. Cysteine 154 serves as the catalytic Nucleophile; methyl group acceptor. Position 160 (serine 160) interacts with DNA.

This sequence belongs to the MGMT family.

It localises to the nucleus. The catalysed reaction is a 6-O-methyl-2'-deoxyguanosine in DNA + L-cysteinyl-[protein] = S-methyl-L-cysteinyl-[protein] + a 2'-deoxyguanosine in DNA. It catalyses the reaction a 4-O-methyl-thymidine in DNA + L-cysteinyl-[protein] = a thymidine in DNA + S-methyl-L-cysteinyl-[protein]. Involved in the cellular defense against the biological effects of O6-methylguanine (O6-MeG) and O4-methylthymine (O4-MeT) in DNA. Repairs the methylated nucleobase in DNA by stoichiometrically transferring the methyl group to a cysteine residue in the enzyme. This is a suicide reaction: the enzyme is irreversibly inactivated. This Candida glabrata (strain ATCC 2001 / BCRC 20586 / JCM 3761 / NBRC 0622 / NRRL Y-65 / CBS 138) (Yeast) protein is Methylated-DNA--protein-cysteine methyltransferase (MGT1).